The following is a 420-amino-acid chain: Tyrosine--tRNA ligase (420 aa).

Tyrosine 36 contacts L-tyrosine. The 'HIGH' region motif lies at 41–50 (PTADSLHIGH). Residues tyrosine 170 and glutamine 174 each contribute to the L-tyrosine site. The 'KMSKS' region signature appears at 231–235 (KFGKS). Residue lysine 234 coordinates ATP. One can recognise an S4 RNA-binding domain in the interval 353-420 (SNIIDVLIET…KKKYFMVNYK (68 aa)).

It belongs to the class-I aminoacyl-tRNA synthetase family. TyrS type 1 subfamily. Homodimer.

The protein localises to the cytoplasm. The catalysed reaction is tRNA(Tyr) + L-tyrosine + ATP = L-tyrosyl-tRNA(Tyr) + AMP + diphosphate + H(+). Catalyzes the attachment of tyrosine to tRNA(Tyr) in a two-step reaction: tyrosine is first activated by ATP to form Tyr-AMP and then transferred to the acceptor end of tRNA(Tyr). The polypeptide is Tyrosine--tRNA ligase (Staphylococcus haemolyticus (strain JCSC1435)).